We begin with the raw amino-acid sequence, 182 residues long: Ribulose bisphosphate carboxylase small subunit, chloroplastic 6 (182 aa).

The transit peptide at Met-1 to Arg-41 directs the protein to the chloroplast.

This sequence belongs to the RuBisCO small chain family. As to quaternary structure, heterohexadecamer of 8 large and 8 small subunits.

It localises to the plastid. Its subcellular location is the chloroplast. RuBisCO catalyzes two reactions: the carboxylation of D-ribulose 1,5-bisphosphate, the primary event in carbon dioxide fixation, as well as the oxidative fragmentation of the pentose substrate. Both reactions occur simultaneously and in competition at the same active site. Although the small subunit is not catalytic it is essential for maximal activity. The protein is Ribulose bisphosphate carboxylase small subunit, chloroplastic 6 of Acetabularia peniculus (Green alga).